Consider the following 274-residue polypeptide: 2,3,4,5-tetrahydropyridine-2,6-dicarboxylate N-succinyltransferase (274 aa).

Substrate contacts are provided by Arg-103 and Asp-140.

The protein belongs to the transferase hexapeptide repeat family. As to quaternary structure, homotrimer.

The protein resides in the cytoplasm. The catalysed reaction is (S)-2,3,4,5-tetrahydrodipicolinate + succinyl-CoA + H2O = (S)-2-succinylamino-6-oxoheptanedioate + CoA. Its pathway is amino-acid biosynthesis; L-lysine biosynthesis via DAP pathway; LL-2,6-diaminopimelate from (S)-tetrahydrodipicolinate (succinylase route): step 1/3. The protein is 2,3,4,5-tetrahydropyridine-2,6-dicarboxylate N-succinyltransferase of Haemophilus ducreyi (strain 35000HP / ATCC 700724).